A 378-amino-acid polypeptide reads, in one-letter code: MSATLELARELIQRPSVTPEDAGCQTLVAERLAAAGFGAEWLNAAGVTNLWAQRGTERPLFCFLGHTDVVPSGPESAWQHPPFQPIVENGCLYGRGAADMKGSVAAFVAAVERFVARHPDHAGAIAVLLTSDEEGPAVDGTRRVVETLAARGAAIDYCLVGEPSSQARLGDEYKVGRRGSLTGHLTVHGEQGHVAYPHQADNPIHAFAPALQELVATEWDQGDADFPPTSFQISNIQAGTGADNVIPGAMEVVFNLRYAPAVSAEELQERIESILHRHGVHHTLHWRHSGAPFATREGALIDAVEQAVTAHTGQCPRRSTSGGTSDGRFMGPTGAQVVELGPLNATIHKANEHVAVADLEALEAIYFDILQHLLAPAD.

A Zn(2+)-binding site is contributed by histidine 66. The active site involves aspartate 68. Zn(2+) is bound at residue aspartate 99. Glutamate 133 acts as the Proton acceptor in catalysis. Positions 134, 162, and 348 each coordinate Zn(2+).

It belongs to the peptidase M20A family. DapE subfamily. Homodimer. Zn(2+) is required as a cofactor. The cofactor is Co(2+).

It carries out the reaction N-succinyl-(2S,6S)-2,6-diaminopimelate + H2O = (2S,6S)-2,6-diaminopimelate + succinate. The protein operates within amino-acid biosynthesis; L-lysine biosynthesis via DAP pathway; LL-2,6-diaminopimelate from (S)-tetrahydrodipicolinate (succinylase route): step 3/3. In terms of biological role, catalyzes the hydrolysis of N-succinyl-L,L-diaminopimelic acid (SDAP), forming succinate and LL-2,6-diaminopimelate (DAP), an intermediate involved in the bacterial biosynthesis of lysine and meso-diaminopimelic acid, an essential component of bacterial cell walls. This chain is Succinyl-diaminopimelate desuccinylase, found in Halorhodospira halophila (strain DSM 244 / SL1) (Ectothiorhodospira halophila (strain DSM 244 / SL1)).